The primary structure comprises 427 residues: Serine hydroxymethyltransferase (427 aa).

(6S)-5,6,7,8-tetrahydrofolate-binding positions include L127 and 131–133; that span reads GHL. At K236 the chain carries N6-(pyridoxal phosphate)lysine.

The protein belongs to the SHMT family. In terms of assembly, homodimer. It depends on pyridoxal 5'-phosphate as a cofactor.

It localises to the cytoplasm. It catalyses the reaction (6R)-5,10-methylene-5,6,7,8-tetrahydrofolate + glycine + H2O = (6S)-5,6,7,8-tetrahydrofolate + L-serine. Its pathway is one-carbon metabolism; tetrahydrofolate interconversion. It participates in amino-acid biosynthesis; glycine biosynthesis; glycine from L-serine: step 1/1. Catalyzes the reversible interconversion of serine and glycine with tetrahydrofolate (THF) serving as the one-carbon carrier. This reaction serves as the major source of one-carbon groups required for the biosynthesis of purines, thymidylate, methionine, and other important biomolecules. Also exhibits THF-independent aldolase activity toward beta-hydroxyamino acids, producing glycine and aldehydes, via a retro-aldol mechanism. The polypeptide is Serine hydroxymethyltransferase (Paramagnetospirillum magneticum (strain ATCC 700264 / AMB-1) (Magnetospirillum magneticum)).